Here is a 481-residue protein sequence, read N- to C-terminus: Transmembrane protein 39A (481 aa).

8 consecutive transmembrane segments (helical) span residues 74-94 (LFET…YINI), 109-129 (STSL…AVML), 150-170 (LCYV…GWVL), 182-202 (SVLK…LCCL), 278-298 (EVLF…LCFV), 313-333 (LIMV…PPHY), 411-431 (LLNV…YSLL), and 437-457 (NHTL…FKLL).

It belongs to the TMEM39 family.

The protein resides in the endoplasmic reticulum membrane. Functionally, regulates autophagy by controlling the spatial distribution and levels of the intracellular phosphatidylinositol 4-phosphate (PtdIns(4)P) pools. Modulates (PtdIns(4)P) levels by regulating the ER-to-Golgi trafficking of the phosphatidylinositide phosphatase SACM1L. The polypeptide is Transmembrane protein 39A (tmem39a) (Danio rerio (Zebrafish)).